The sequence spans 67 residues: ATP synthase subunit c (67 aa).

The next 2 membrane-spanning stretches (helical) occupy residues 6–26 (ILAL…LVAN) and 46–66 (IMGV…TFFV).

It belongs to the ATPase C chain family. F-type ATPases have 2 components, F(1) - the catalytic core - and F(0) - the membrane proton channel. F(1) has five subunits: alpha(3), beta(3), gamma(1), delta(1), epsilon(1). F(0) has three main subunits: a(1), b(2) and c(10-14). The alpha and beta chains form an alternating ring which encloses part of the gamma chain. F(1) is attached to F(0) by a central stalk formed by the gamma and epsilon chains, while a peripheral stalk is formed by the delta and b chains.

It localises to the cell membrane. F(1)F(0) ATP synthase produces ATP from ADP in the presence of a proton or sodium gradient. F-type ATPases consist of two structural domains, F(1) containing the extramembraneous catalytic core and F(0) containing the membrane proton channel, linked together by a central stalk and a peripheral stalk. During catalysis, ATP synthesis in the catalytic domain of F(1) is coupled via a rotary mechanism of the central stalk subunits to proton translocation. Its function is as follows. Key component of the F(0) channel; it plays a direct role in translocation across the membrane. A homomeric c-ring of between 10-14 subunits forms the central stalk rotor element with the F(1) delta and epsilon subunits. The protein is ATP synthase subunit c of Streptococcus mutans serotype c (strain ATCC 700610 / UA159).